The chain runs to 474 residues: Glutamate--tRNA ligase (474 aa).

The 'HIGH' region signature appears at 11 to 21 (PSPTGFLHIGG). A 'KMSKS' region motif is present at residues 240–244 (KLSKR). Residue Lys243 participates in ATP binding.

Belongs to the class-I aminoacyl-tRNA synthetase family. Glutamate--tRNA ligase type 1 subfamily. Monomer.

The protein localises to the cytoplasm. It carries out the reaction tRNA(Glu) + L-glutamate + ATP = L-glutamyl-tRNA(Glu) + AMP + diphosphate. Catalyzes the attachment of glutamate to tRNA(Glu) in a two-step reaction: glutamate is first activated by ATP to form Glu-AMP and then transferred to the acceptor end of tRNA(Glu). This chain is Glutamate--tRNA ligase, found in Nitrobacter winogradskyi (strain ATCC 25391 / DSM 10237 / CIP 104748 / NCIMB 11846 / Nb-255).